The chain runs to 228 residues: MNKIITIIPISSFNNSKTRLSPFLSESERTNLLKVMLKDIVSNIQDHVSDIIVTSKDEYVLNYAKYLNLNVFKEKEHEHDFLNNAISDAISYISKNYDNYSVMILPADIPLFNSRNMKYILKNRDDFIISPSKGGGTNLLYINREYNYKPLFGAFSFFKHVQEAKNNNLDVNIYDSFYLSLDVNTPEDLGEILLHGRNTHTYNYLSNLNIGVESNHGKERLYVYRKNE.

The protein belongs to the CofC family. In terms of assembly, homodimer.

It carries out the reaction (2S)-2-phospholactate + GTP + H(+) = (2S)-lactyl-2-diphospho-5'-guanosine + diphosphate. It participates in cofactor biosynthesis; coenzyme F420 biosynthesis. Guanylyltransferase that catalyzes the activation of (2S)-2-phospholactate (2-PL) as (2S)-lactyl-2-diphospho-5'-guanosine, via the condensation of 2-PL with GTP. It is involved in the biosynthesis of coenzyme F420, a hydride carrier cofactor. The protein is 2-phospho-L-lactate guanylyltransferase of Methanosphaera stadtmanae (strain ATCC 43021 / DSM 3091 / JCM 11832 / MCB-3).